The following is a 293-amino-acid chain: Probable aspartoacylase (293 aa).

2 residues coordinate Zn(2+): H14 and E17. Residues R56 and 63–64 each bind substrate; that span reads NR. Position 106 (H106) interacts with Zn(2+). Residues E165 and Y276 each contribute to the substrate site.

This sequence belongs to the AspA/AstE family. Aspartoacylase subfamily. Requires Zn(2+) as cofactor.

It catalyses the reaction an N-acyl-L-aspartate + H2O = a carboxylate + L-aspartate. The protein is Probable aspartoacylase of Trichodesmium erythraeum (strain IMS101).